The sequence spans 452 residues: Scaffold protein ILK (452 aa).

Residue M1 is modified to N-acetylmethionine. ANK repeat units lie at residues 2 to 30 (DDIFTQCREGNAVAVRLWLDNTENDLNQG), 31 to 63 (DDHGFSPLHWACREGRSAVVEMLIMRGARINVM), 64 to 96 (NRGDDTPLHLAASHGHRDIVQKLLQYKADINAV), 97 to 129 (NEHGNVPLHYACFWGQDQVAEDLVANGALVSIC), and 130 to 174 (NKYG…GTTR). Positions 33–139 (HGFSPLHWAC…NKYGEMPVDK (107 aa)) are interaction with LIMS1. T173 carries the phosphothreonine; by PAK1 modification. The segment at 180-212 (GTLNKHSGIDFKQLNFLTKLNENHSGELWKGRW) is PH-like; mediates interaction with TGFB1I1. The residue at position 186 (S186) is a Phosphoserine. The Protein kinase domain occupies 193–446 (LNFLTKLNEN…PKFDMIVPIL (254 aa)). Positions 200, 202, 203, 204, and 220 each coordinate ATP. Residue S246 is modified to Phosphoserine; by PAK1. H270, M272, and N279 together coordinate ATP. D339 provides a ligand contact to Mg(2+). Position 341 (K341) interacts with ATP. The Nuclear localization signal motif lies at 363–371 (KKPEDTNRR). K426 carries the post-translational modification N6-acetyllysine.

It belongs to the protein kinase superfamily. TKL Ser/Thr protein kinase family. As to quaternary structure, component of the heterotrimeric IPP (ILK-PINCH-PARVIN) complex composed of ILK, LIMS1/PINCH and PARVA; the complex binds to F-actin via the C-terminal tail of LIMS1 and the N-terminal region of PARVA, promoting F-actin filament bundling. Formation of the IPP complex is dependent on protein kinase C and precedes integrin-mediated cell adhesion and spreading. ILK also interacts with LIMS2/PINCH2 and with PARVB and PARVG which may substitute for LIMS1 and PARVA in the IPP complex; PARVA and PARVB compete for the same binding site. Interaction with PARVG promotes the establishment of cell polarity required for leukocyte migration. Interacts with the cytoplasmic domain of integrin ITGB1 and may also interact with integrins ITGB2, ITGB3 and/or ITGB5. Interacts probably also with TGFB1I1. Interacts (via ANK repeats) with EPHA1 (via SAM domain); stimulated by EFNA1 but independent of the kinase activity of EPHA1. Interacts with FERMT2. Interacts with LIMD2; leading to activate the protein kinase activity. Interacts with PXN/PAXILLIN (via LD motif 4). Interacts with CCDC25 (via cytoplasmic region); initiating the ILK-PARVB cascade to induce cytoskeleton rearrangement and directional migration of cells. Interacts with IQGAP1; the interaction is required for localization of IQGAP1 to the cell cortex. In terms of processing, phosphorylation by PAK1 modulates ILK subcellular location by promoting its nuclear export. As to expression, highly expressed in heart followed by skeletal muscle, pancreas and kidney. Weakly expressed in placenta, lung and liver.

It is found in the cell junction. The protein resides in the focal adhesion. Its subcellular location is the cell membrane. It localises to the cell projection. The protein localises to the lamellipodium. It is found in the cytoplasm. The protein resides in the myofibril. Its subcellular location is the sarcomere. It localises to the nucleus. The protein localises to the cytoskeleton. It is found in the microtubule organizing center. The protein resides in the centrosome. Its subcellular location is the cell cortex. Functionally, scaffold protein which mediates protein-protein interactions during a range of cellular events including focal adhesion assembly, cell adhesion and cell migration. Regulates integrin-mediated signal transduction by contributing to inside-out integrin activation. Recruits PARVA and LIMS1/PITCH to form the heterotrimeric IPP (ILK-PINCH-PARVIN) complex which binds to F-actin via the C-terminal tail of LIMS1 and the N-terminal region of PARVA, promoting F-actin filament bundling, a process required to generate force for actin cytoskeleton reorganization and subsequent dynamic cell adhesion events such as cell spreading and migration. Binding to PARVA promotes effective assembly of ILK into focal adhesions while PARVA-bound ILK can simultaneously engage integrin-beta cytoplasmic tails to mediate cell adhesion. Plays a role with PARVG in promoting the cell adhesion and spreading of leukocytes. Acts as an upstream effector of both AKT1/PKB and GSK3. Mediates trafficking of caveolae to the cell surface in an ITGB1-dependent manner by promoting the recruitment of IQGAP1 to the cell cortex which cooperates with its effector DIAPH1 to locally stabilize microtubules and allow stable insertion of caveolae into the plasma membrane. Required for the maintenance of mitotic spindle integrity by promoting phosphorylation of TACC3 by AURKA. Associates with chromatin and may act as a negative regulator of transcription when located in the nucleus. The sequence is that of Scaffold protein ILK from Homo sapiens (Human).